A 238-amino-acid chain; its full sequence is Mannose-binding protein A (238 aa).

An N-terminal signal peptide occupies residues 1–17; sequence MLLLPLLVLLCVVSVSS. The span at 38-49 shows a compositional bias: basic and acidic residues; the sequence is DGRDGPKGEKGE. A disordered region spans residues 38-87; sequence DGRDGPKGEKGEPGQGLRGLQGPPGKLGPPGSVGAPGSQGPKGQKGDRGD. The region spanning 39–88 is the Collagen-like domain; the sequence is GRDGPKGEKGEPGQGLRGLQGPPGKLGPPGSVGAPGSQGPKGQKGDRGDS. P43 carries the 4-hydroxyproline modification. A 5-hydroxylysine mark is found at K44 and K47. Residues K44 and K47 are each glycosylated (O-linked (Gal...) hydroxylysine). P50, P61, P67, P73, and P78 each carry 4-hydroxyproline. 5-hydroxylysine is present on residues K79 and K82. O-linked (Gal...) hydroxylysine glycans are attached at residues K79 and K82. Positions 143–238 constitute a C-type lectin domain; that stretch reads ALCSELRGTV…SHTAVCEFPA (96 aa). Intrachain disulfides connect C145/C234 and C212/C226. Ca(2+) is bound by residues D178, E182, E202, N204, D205, E210, D211, N222, and D223. The segment at 202–210 is calcium-dependent carbohydrate binding; it reads EPNDHGSGE.

As to quaternary structure, homotrimer. Forms higher oligomeric complexes formed by the association of two, three or more homotrimers. Oligomerization occurs in the endoplasmic reticulum. Interacts with MASP1 and MASP2. Hydroxylated on lysine and proline residues within the collagen-like domain. In terms of processing, O-glycosylated. O-linked glycans on hydroxylysine residues consist of Glc-Gal disaccharides bound to the oxygen atom of post-translationally added hydroxyl groups. Detected in blood serum (at protein level).

The protein localises to the secreted. In terms of biological role, calcium-dependent lectin. Plays a role in the innate immune response by binding mannose, fucose and N-acetylglucosamine moieties on different microorganisms and mediating activation of the lectin complement pathway. Binds to late apoptotic cells, as well as to apoptotic blebs and to necrotic cells, but not to early apoptotic cells, facilitating their uptake by macrophages. This Rattus norvegicus (Rat) protein is Mannose-binding protein A (Mbl1).